The primary structure comprises 227 residues: Cytochrome c oxidase subunit 2 (227 aa).

Over 1 to 14 (MAYPYELGFQDASS) the chain is Mitochondrial intermembrane. A helical transmembrane segment spans residues 15–45 (PIMEELLHFHDHTLMIVFLISTLVLYLITIM). Residues 46–59 (LTTKLTHTSTMDAQ) lie on the Mitochondrial matrix side of the membrane. The chain crosses the membrane as a helical span at residues 60–87 (EIETIWTILPAIILILIALPSLRILYMM). At 88–227 (DEINSPSLTV…DFEIWSSSML (140 aa)) the chain is on the mitochondrial intermembrane side. Histidine 161, cysteine 196, glutamate 198, cysteine 200, histidine 204, and methionine 207 together coordinate Cu cation. Glutamate 198 provides a ligand contact to Mg(2+).

The protein belongs to the cytochrome c oxidase subunit 2 family. In terms of assembly, component of the cytochrome c oxidase (complex IV, CIV), a multisubunit enzyme composed of 14 subunits. The complex is composed of a catalytic core of 3 subunits MT-CO1, MT-CO2 and MT-CO3, encoded in the mitochondrial DNA, and 11 supernumerary subunits COX4I, COX5A, COX5B, COX6A, COX6B, COX6C, COX7A, COX7B, COX7C, COX8 and NDUFA4, which are encoded in the nuclear genome. The complex exists as a monomer or a dimer and forms supercomplexes (SCs) in the inner mitochondrial membrane with NADH-ubiquinone oxidoreductase (complex I, CI) and ubiquinol-cytochrome c oxidoreductase (cytochrome b-c1 complex, complex III, CIII), resulting in different assemblies (supercomplex SCI(1)III(2)IV(1) and megacomplex MCI(2)III(2)IV(2)). Found in a complex with TMEM177, COA6, COX18, COX20, SCO1 and SCO2. Interacts with TMEM177 in a COX20-dependent manner. Interacts with COX20. Interacts with COX16. Requires Cu cation as cofactor.

It is found in the mitochondrion inner membrane. It catalyses the reaction 4 Fe(II)-[cytochrome c] + O2 + 8 H(+)(in) = 4 Fe(III)-[cytochrome c] + 2 H2O + 4 H(+)(out). Functionally, component of the cytochrome c oxidase, the last enzyme in the mitochondrial electron transport chain which drives oxidative phosphorylation. The respiratory chain contains 3 multisubunit complexes succinate dehydrogenase (complex II, CII), ubiquinol-cytochrome c oxidoreductase (cytochrome b-c1 complex, complex III, CIII) and cytochrome c oxidase (complex IV, CIV), that cooperate to transfer electrons derived from NADH and succinate to molecular oxygen, creating an electrochemical gradient over the inner membrane that drives transmembrane transport and the ATP synthase. Cytochrome c oxidase is the component of the respiratory chain that catalyzes the reduction of oxygen to water. Electrons originating from reduced cytochrome c in the intermembrane space (IMS) are transferred via the dinuclear copper A center (CU(A)) of subunit 2 and heme A of subunit 1 to the active site in subunit 1, a binuclear center (BNC) formed by heme A3 and copper B (CU(B)). The BNC reduces molecular oxygen to 2 water molecules using 4 electrons from cytochrome c in the IMS and 4 protons from the mitochondrial matrix. The polypeptide is Cytochrome c oxidase subunit 2 (MT-CO2) (Cavia aperea (Brazilian guinea pig)).